The chain runs to 274 residues: Glutamate--cysteine ligase regulatory subunit (274 aa).

Position 59 is a phosphoserine (Ser59). Lys263 is modified (N6-acetyllysine).

This sequence belongs to the aldo/keto reductase family. Glutamate--cysteine ligase light chain subfamily. As to quaternary structure, heterodimer of a catalytic heavy chain and a regulatory light chain.

It participates in sulfur metabolism; glutathione biosynthesis; glutathione from L-cysteine and L-glutamate: step 1/2. In Bos taurus (Bovine), this protein is Glutamate--cysteine ligase regulatory subunit (GCLM).